The sequence spans 360 residues: MLLFLADLLAHFQSAFNVFNYLTLRVILGTLTALMLCLWLGPQVIRRLVERQIGQAVRDDGPQSHLSKAGTPTMGGAMILIAIAVSTLLWGDLTNHYVWLVLAVTLGFGAIGWVDDYRKVVEKNPRGLPARWKYFWQSAIGLGAAVTLYLTAASPVEVSLIVPLFKDVVVPLGLFYIVLTYFVIVGSSNAVNLTDGLDGLAIMPTVLVAMGLAIFAYASGNTVFAQYLHIPLVPGAGELAVFCGTIAGAGLGFLWFNTYPAQVFMGDVGALALGAALGVVAVIVRQEIVLFIMGGVFVMETVSVMLQVGSYKLTGRRIFRMAPLHHHFELKGWPEPRVIVRFWIITVVLVLLGLATLKIR.

10 consecutive transmembrane segments (helical) span residues 21 to 41, 73 to 93, 94 to 114, 145 to 165, 168 to 188, 199 to 219, 236 to 256, 263 to 283, 288 to 308, and 339 to 359; these read YLTLRVILGTLTALMLCLWLG, TMGGAMILIAIAVSTLLWGDL, TNHYVWLVLAVTLGFGAIGWV, AVTLYLTAASPVEVSLIVPLF, VVVPLGLFYIVLTYFVIVGSS, GLAIMPTVLVAMGLAIFAYAS, AGELAVFCGTIAGAGLGFLWF, VFMGDVGALALGAALGVVAVI, IVLFIMGGVFVMETVSVMLQV, and IVRFWIITVVLVLLGLATLKI.

It belongs to the glycosyltransferase 4 family. MraY subfamily. Mg(2+) is required as a cofactor.

Its subcellular location is the cell inner membrane. The enzyme catalyses UDP-N-acetyl-alpha-D-muramoyl-L-alanyl-gamma-D-glutamyl-meso-2,6-diaminopimeloyl-D-alanyl-D-alanine + di-trans,octa-cis-undecaprenyl phosphate = di-trans,octa-cis-undecaprenyl diphospho-N-acetyl-alpha-D-muramoyl-L-alanyl-D-glutamyl-meso-2,6-diaminopimeloyl-D-alanyl-D-alanine + UMP. It functions in the pathway cell wall biogenesis; peptidoglycan biosynthesis. Its function is as follows. Catalyzes the initial step of the lipid cycle reactions in the biosynthesis of the cell wall peptidoglycan: transfers peptidoglycan precursor phospho-MurNAc-pentapeptide from UDP-MurNAc-pentapeptide onto the lipid carrier undecaprenyl phosphate, yielding undecaprenyl-pyrophosphoryl-MurNAc-pentapeptide, known as lipid I. The polypeptide is Phospho-N-acetylmuramoyl-pentapeptide-transferase (Chromohalobacter salexigens (strain ATCC BAA-138 / DSM 3043 / CIP 106854 / NCIMB 13768 / 1H11)).